The following is a 162-amino-acid chain: Nascent polypeptide-associated complex subunit beta (162 aa).

Disordered regions lie at residues 1-39 (MPVD…NISE) and 130-162 (EQAK…DNVE). A compositionally biased stretch (basic residues) spans 24–33 (TPRRPGKKVA). The NAC-A/B domain occupies 38–103 (SEDEKKLSAT…SQQKDIAELI (66 aa)). The span at 146 to 162 (GDDEIPNLVENFEDNVE) shows a compositional bias: acidic residues.

It belongs to the NAC-beta family. In terms of assembly, part of the nascent polypeptide-associated complex (NAC), consisting of EGD2 and EGD1. NAC associates with ribosomes via EGD1.

It is found in the cytoplasm. Its subcellular location is the nucleus. In terms of biological role, component of the nascent polypeptide-associated complex (NAC), a dynamic component of the ribosomal exit tunnel, protecting the emerging polypeptides from interaction with other cytoplasmic proteins to ensure appropriate nascent protein targeting. The NAC complex also promotes mitochondrial protein import by enhancing productive ribosome interactions with the outer mitochondrial membrane and blocks the inappropriate interaction of ribosomes translating non-secretory nascent polypeptides with translocation sites in the membrane of the endoplasmic reticulum. EGD1 may act as a transcription factor that exert a negative effect on the expression of several genes that are transcribed by RNA polymerase II. This is Nascent polypeptide-associated complex subunit beta (EGD1) from Yarrowia lipolytica (strain CLIB 122 / E 150) (Yeast).